The chain runs to 261 residues: Small ribosomal subunit protein uS2 (261 aa).

The protein belongs to the universal ribosomal protein uS2 family.

This Rhodospirillum centenum (strain ATCC 51521 / SW) protein is Small ribosomal subunit protein uS2.